A 523-amino-acid polypeptide reads, in one-letter code: DNA-directed primase/polymerase protein (523 aa).

Substrate is bound by residues R78, 117-119, and 168-172; these read DLE and KFSHH. Positions 117 and 119 each coordinate Mn(2+). The tract at residues 203-230 is disordered; that stretch reads LKKSNPEAPGENRDDVEGTQAKRRKTEE. Substrate is bound by residues 258–261 and K267; that span reads RNFR. The Zn(2+) site is built by C390, H397, C417, and C422. The Zinc knuckle motif motif lies at 390-423; the sequence is CHNVKRFHKSNNIIIVVDLKEEVWYQKCHDPECR. Positions 467–477 are enriched in low complexity; the sequence is APAESTSTTPS. The segment at 467–523 is disordered; that stretch reads APAESTSTTPSEDTEGWGDWPDDPAYLRALQEVEEEEEDEDEEVPDELLLQAVNECE. Composition is skewed to acidic residues over residues 478 to 488 and 498 to 512; these read EDTEGWGDWPD and EVEE…EVPD.

Belongs to the eukaryotic-type primase small subunit family. The cofactor is Mn(2+).

The protein resides in the nucleus. Its subcellular location is the mitochondrion matrix. It localises to the chromosome. It carries out the reaction ssDNA + n NTP = ssDNA/pppN(pN)n-1 hybrid + (n-1) diphosphate.. The enzyme catalyses DNA(n) + a 2'-deoxyribonucleoside 5'-triphosphate = DNA(n+1) + diphosphate. DNA primase and DNA polymerase required to tolerate replication-stalling lesions by bypassing them. Required to facilitate mitochondrial and nuclear replication fork progression by initiating de novo DNA synthesis using dNTPs and acting as an error-prone DNA polymerase able to bypass certain DNA lesions. Shows a high capacity to tolerate DNA damage lesions such as 8oxoG and abasic sites in DNA. Provides different translesion synthesis alternatives when DNA replication is stalled: able to synthesize DNA primers downstream of lesions, such as UV lesions, R-loops and G-quadruplexes, to allow DNA replication to continue. Can also realign primers ahead of 'unreadable lesions' such as abasic sites and 6-4 photoproduct (6-4 pyrimidine-pyrimidinone), thereby skipping the lesion. Repriming avoids fork degradation while leading to accumulation of internal ssDNA gaps behind the forks. Also able to incorporate nucleotides opposite DNA lesions such as 8oxoG, like a regular translesion synthesis DNA polymerase. Also required for reinitiating stalled forks after ultraviolet (UV) damage during nuclear DNA replication. Required for mitochondrial DNA (mtDNA) synthesis and replication, by reinitiating synthesis after UV damage or in the presence of chain-terminating nucleotides. In addition to its role in DNA damage response, also required to maintain efficient nuclear and mitochondrial DNA replication in unperturbed cells. The sequence is that of DNA-directed primase/polymerase protein from Danio rerio (Zebrafish).